The following is a 57-amino-acid chain: MSKTVVRKNESLEDALRRFKRSVSKTGTLQEARKREFYEKPSVRRKKKSEAARKRKY.

The interval 35–57 is disordered; the sequence is REFYEKPSVRRKKKSEAARKRKY. The span at 43–57 shows a compositional bias: basic residues; that stretch reads VRRKKKSEAARKRKY.

Belongs to the bacterial ribosomal protein bS21 family.

In Bacillus licheniformis (strain ATCC 14580 / DSM 13 / JCM 2505 / CCUG 7422 / NBRC 12200 / NCIMB 9375 / NCTC 10341 / NRRL NRS-1264 / Gibson 46), this protein is Small ribosomal subunit protein bS21.